We begin with the raw amino-acid sequence, 533 residues long: Multicopy suppressor of sporulation protein msa1 (533 aa).

The tract at residues 30-68 is disordered; it reads DIPPGSLSENDNSTTFIKPPLETASSSTPIPSSSSSGVL. The segment covering 36-45 has biased composition (polar residues); sequence LSENDNSTTF. A compositionally biased stretch (low complexity) spans 54-68; sequence SSSTPIPSSSSSGVL. The RRM 1 domain maps to 79–158; sequence ACLFVASLNS…RHIRIERAKV (80 aa). Residues 237-292 form a disordered region; the sequence is YKKKGSSPFSPPNAHSRRRKSQGKDQSNTPVIKAPAPIPFSVSSDPPSTMGRSNSA. Positions 277–292 are enriched in polar residues; that stretch reads SVSSDPPSTMGRSNSA. In terms of domain architecture, RRM 2 spans 365 to 441; that stretch reads YSIFVGQLDP…KPLRVEFRQL (77 aa).

Its subcellular location is the cytoplasm. Functionally, negative regulator of sexual differentiation. Acts by repressing the transcription of meiosis-inducing, ste11-regulated genes. The chain is Multicopy suppressor of sporulation protein msa1 (msa1) from Schizosaccharomyces pombe (strain 972 / ATCC 24843) (Fission yeast).